The following is an 80-amino-acid chain: Anaphase-promoting complex subunit hcn1 (80 aa).

N-acetylmethionine is present on M1. The segment at 26–54 is disordered; sequence QTLDSESTTEEALQKNEESTRLSPEKKKI. Positions 37–54 are enriched in basic and acidic residues; that stretch reads ALQKNEESTRLSPEKKKI.

The APC/C is composed of at least 13 subunits: apc1, apc2, nuc2, apc4, apc5, cut9, apc8, apc10, apc11, hcn1, apc13, apc14 and apc15. Interacts directly (via N-terminus) with cut9.

Functionally, component of the anaphase promoting complex/cyclosome (APC/C), a cell cycle-regulated E3 ubiquitin-protein ligase complex that controls progression through mitosis and the G1 phase of the cell cycle. The APC/C is thought to confer substrate specificity and, in the presence of ubiquitin-conjugating E2 enzymes, it catalyzes the formation of protein-ubiquitin conjugates that are subsequently degraded by the 26S proteasome. Has a role in assembling cut9 in the 20S APC/cyclosome. This Schizosaccharomyces pombe (strain 972 / ATCC 24843) (Fission yeast) protein is Anaphase-promoting complex subunit hcn1 (hcn1).